The following is a 206-amino-acid chain: Pyridoxine/pyridoxamine 5'-phosphate oxidase (206 aa).

Residues 54–59, 69–70, Arg-75, Lys-76, and Gln-98 each bind FMN; these read RVVLLK and YT. Lys-59 serves as a coordination point for substrate. Residues Tyr-116, Arg-120, and Ser-124 each contribute to the substrate site. FMN-binding positions include 133-134 and Trp-178; that span reads QS. 184 to 186 contributes to the substrate binding site; it reads RLH. Arg-188 provides a ligand contact to FMN.

This sequence belongs to the pyridoxamine 5'-phosphate oxidase family. In terms of assembly, homodimer. The cofactor is FMN.

It carries out the reaction pyridoxamine 5'-phosphate + O2 + H2O = pyridoxal 5'-phosphate + H2O2 + NH4(+). The enzyme catalyses pyridoxine 5'-phosphate + O2 = pyridoxal 5'-phosphate + H2O2. It participates in cofactor metabolism; pyridoxal 5'-phosphate salvage; pyridoxal 5'-phosphate from pyridoxamine 5'-phosphate: step 1/1. The protein operates within cofactor metabolism; pyridoxal 5'-phosphate salvage; pyridoxal 5'-phosphate from pyridoxine 5'-phosphate: step 1/1. Catalyzes the oxidation of either pyridoxine 5'-phosphate (PNP) or pyridoxamine 5'-phosphate (PMP) into pyridoxal 5'-phosphate (PLP). This Anaplasma phagocytophilum (strain HZ) protein is Pyridoxine/pyridoxamine 5'-phosphate oxidase.